Here is a 160-residue protein sequence, read N- to C-terminus: Type IV major fimbrial protein FimA (160 aa).

The propeptide at 1–7 (MKSLQKG) is leader sequence. F8 carries the post-translational modification N-methylphenylalanine. A helical transmembrane segment spans residues 8-28 (FTLIELMIVVAIIGILAAFAI). A disulfide bond links C63 and C106.

This sequence belongs to the N-Me-Phe pilin family. The pili are polar flexible filaments of about 5.4 nanometers diameter and 2.5 micrometers average length; they consist of only a single polypeptide chain arranged in a helical configuration of five subunits per turn in the assembled pilus.

The protein localises to the fimbrium. It localises to the membrane. Functionally, major component of the type IV fimbriae that plays an essential role in twitching motility, natural transformation, and protease secretion. The protein is Type IV major fimbrial protein FimA (fimA) of Dichelobacter nodosus (Bacteroides nodosus).